A 396-amino-acid chain; its full sequence is Interleukin enhancer-binding factor 2 homolog (396 aa).

In terms of domain architecture, DZF spans K22–I379. The interval P367–E396 is disordered. The segment covering D374–E396 has biased composition (acidic residues).

It is found in the nucleus. Its function is as follows. May regulate transcription of undefined genes. This chain is Interleukin enhancer-binding factor 2 homolog, found in Drosophila melanogaster (Fruit fly).